The sequence spans 147 residues: Large ribosomal subunit protein uL13 (147 aa).

It belongs to the universal ribosomal protein uL13 family. As to quaternary structure, part of the 50S ribosomal subunit.

Its function is as follows. This protein is one of the early assembly proteins of the 50S ribosomal subunit, although it is not seen to bind rRNA by itself. It is important during the early stages of 50S assembly. The chain is Large ribosomal subunit protein uL13 from Leuconostoc citreum (strain KM20).